Reading from the N-terminus, the 858-residue chain is Leucine--tRNA ligase (858 aa).

The short motif at 42–52 (PYPSGRLHMGH) is the 'HIGH' region element. The short motif at 618-622 (KMSKS) is the 'KMSKS' region element. Position 621 (K621) interacts with ATP.

This sequence belongs to the class-I aminoacyl-tRNA synthetase family.

The protein resides in the cytoplasm. It carries out the reaction tRNA(Leu) + L-leucine + ATP = L-leucyl-tRNA(Leu) + AMP + diphosphate. The polypeptide is Leucine--tRNA ligase (Vibrio atlanticus (strain LGP32) (Vibrio splendidus (strain Mel32))).